Reading from the N-terminus, the 188-residue chain is MAKSVPAIFLDRDGTINVDHGYVHEIDAFEFIDGVIDAMRELKKMGYALVVVTNQSGIARGKFTEAQFETLTEWMDWSLADRDVDLDGIYYCPHHPQGSIEEFRQVCDCRKPHPGMLISARDFLHIDMAASYMVGDKLEDMQAAAAANVGTKVLVRTGKPVTAEAENAADWVLNSLADLPSAIKKQQK.

Asp11 acts as the Nucleophile in catalysis. Mg(2+)-binding residues include Asp11 and Asp13. Substrate is bound by residues 11–13 (DRD), 19–22 (DHGY), and 53–56 (TNQS). Asp13 (proton donor) is an active-site residue. 4 residues coordinate Zn(2+): Cys92, His94, Cys107, and Cys109. 110 to 111 (RK) lines the substrate pocket. Mg(2+) is bound by residues Asp136 and Lys137. Lys137 contributes to the substrate binding site.

Belongs to the GmhB family. As to quaternary structure, monomer. Requires Mg(2+) as cofactor. Zn(2+) serves as cofactor.

It is found in the cytoplasm. It catalyses the reaction D-glycero-beta-D-manno-heptose 1,7-bisphosphate + H2O = D-glycero-beta-D-manno-heptose 1-phosphate + phosphate. Its pathway is nucleotide-sugar biosynthesis; ADP-L-glycero-beta-D-manno-heptose biosynthesis; ADP-L-glycero-beta-D-manno-heptose from D-glycero-beta-D-manno-heptose 7-phosphate: step 2/4. It functions in the pathway bacterial outer membrane biogenesis; LPS core biosynthesis. Functionally, converts the D-glycero-beta-D-manno-heptose 1,7-bisphosphate intermediate into D-glycero-beta-D-manno-heptose 1-phosphate by removing the phosphate group at the C-7 position in vitro. Also catalyzes the dephosphorylation of D-glycero-alpha-D-manno-heptose 1,7-bisphosphate and 2-deoxy-D-manno-2-octoulosonate-8-phosphate in vitro. The protein is D-glycero-beta-D-manno-heptose-1,7-bisphosphate 7-phosphatase (gmhB) of Salmonella typhi.